Consider the following 117-residue polypeptide: Large ribosomal subunit protein bL19 (117 aa).

It belongs to the bacterial ribosomal protein bL19 family.

This protein is located at the 30S-50S ribosomal subunit interface and may play a role in the structure and function of the aminoacyl-tRNA binding site. This Exiguobacterium sibiricum (strain DSM 17290 / CCUG 55495 / CIP 109462 / JCM 13490 / 255-15) protein is Large ribosomal subunit protein bL19.